The following is a 219-amino-acid chain: MGQKVNPVGLRVGVIRDWESRWFAEKDYATLLHEDIKIREYITARLKDSSVSKVEIERAANRVNVTIHTAKPGMVIGKGGTEVEALRKALNQLTGKRVHINILEVKKADLDAKLVAENIARQLENRVSFRRAQKQVIQRAMRAGAKGIKTQVSGRLGGADIARAESYSEGTVPLHTLRADIDYATAEADTTYGKLGVKVWIYRGEVLPSKKKASEEGGK.

The region spanning 38-106 (IREYITARLK…RVHINILEVK (69 aa)) is the KH type-2 domain.

Belongs to the universal ribosomal protein uS3 family. As to quaternary structure, part of the 30S ribosomal subunit. Forms a tight complex with proteins S10 and S14.

Binds the lower part of the 30S subunit head. Binds mRNA in the 70S ribosome, positioning it for translation. The sequence is that of Small ribosomal subunit protein uS3 from Bacillus cytotoxicus (strain DSM 22905 / CIP 110041 / 391-98 / NVH 391-98).